A 314-amino-acid chain; its full sequence is Carbamate kinase (314 aa).

This sequence belongs to the carbamate kinase family. In terms of assembly, homodimer.

It catalyses the reaction hydrogencarbonate + NH4(+) + ATP = carbamoyl phosphate + ADP + H2O + H(+). It functions in the pathway metabolic intermediate metabolism; carbamoyl phosphate degradation; CO(2) and NH(3) from carbamoyl phosphate: step 1/1. This is Carbamate kinase (CBK) from Trichomonas vaginalis.